A 638-amino-acid polypeptide reads, in one-letter code: Probable potassium transport system protein Kup (638 aa).

Helical transmembrane passes span 25-45 (LAIAAIGVVFGDIGTSPLYSL), 65-85 (VISLLFWAIILVVGIKYLLFV), 114-134 (AGALMALGIFGACMFYGDAVI), 152-172 (PHLSHLVLPITIVILIALFWI), 184-204 (FGPIMVLWFVAIAALGVYHIV), 226-246 (LLQAYVVLGSVVLVLTGAEAL), 262-282 (AYGLVMPSLVLNYFGQGALLI), 291-311 (PFFLLAPEWGLLPLVILSTVA), 352-372 (IYVPVVNWLLLFVILCIVIGF), 382-402 (YGIAVTATMVITTVLAAVVMV), 410-430 (LLVGAIIAVFLAVDLGFFGAN), and 434-454 (VAQGGWLPLGIGALLFFLLMT).

The protein belongs to the HAK/KUP transporter (TC 2.A.72) family.

It is found in the cell inner membrane. The enzyme catalyses K(+)(in) + H(+)(in) = K(+)(out) + H(+)(out). Its function is as follows. Transport of potassium into the cell. Likely operates as a K(+):H(+) symporter. This chain is Probable potassium transport system protein Kup, found in Burkholderia lata (strain ATCC 17760 / DSM 23089 / LMG 22485 / NCIMB 9086 / R18194 / 383).